A 288-amino-acid polypeptide reads, in one-letter code: tRNA (guanine-N(1)-)-methyltransferase (288 aa).

Residues 82–105 (ATDAVDTSDPGDSAAPDSSAPSGA) form a disordered region. Residues 89–105 (SDPGDSAAPDSSAPSGA) show a composition bias toward low complexity. S-adenosyl-L-methionine is bound by residues G137 and 162 to 167 (IGDYVL).

It belongs to the RNA methyltransferase TrmD family. Homodimer.

Its subcellular location is the cytoplasm. It carries out the reaction guanosine(37) in tRNA + S-adenosyl-L-methionine = N(1)-methylguanosine(37) in tRNA + S-adenosyl-L-homocysteine + H(+). In terms of biological role, specifically methylates guanosine-37 in various tRNAs. This chain is tRNA (guanine-N(1)-)-methyltransferase, found in Bifidobacterium longum (strain DJO10A).